The primary structure comprises 201 residues: Imidazoleglycerol-phosphate dehydratase (201 aa).

Belongs to the imidazoleglycerol-phosphate dehydratase family.

It is found in the cytoplasm. It carries out the reaction D-erythro-1-(imidazol-4-yl)glycerol 3-phosphate = 3-(imidazol-4-yl)-2-oxopropyl phosphate + H2O. The protein operates within amino-acid biosynthesis; L-histidine biosynthesis; L-histidine from 5-phospho-alpha-D-ribose 1-diphosphate: step 6/9. The chain is Imidazoleglycerol-phosphate dehydratase from Synechococcus sp. (strain CC9902).